Here is a 230-residue protein sequence, read N- to C-terminus: 3-dehydroquinate dehydratase (230 aa).

Residues serine 26, 51–53 (EIR), and arginine 84 contribute to the 3-dehydroquinate site. Catalysis depends on histidine 127, which acts as the Proton donor/acceptor. Residue lysine 150 is the Schiff-base intermediate with substrate of the active site. Arginine 190, threonine 209, and glutamine 213 together coordinate 3-dehydroquinate.

This sequence belongs to the type-I 3-dehydroquinase family. Homodimer.

It carries out the reaction 3-dehydroquinate = 3-dehydroshikimate + H2O. It participates in metabolic intermediate biosynthesis; chorismate biosynthesis; chorismate from D-erythrose 4-phosphate and phosphoenolpyruvate: step 3/7. Involved in the third step of the chorismate pathway, which leads to the biosynthesis of aromatic amino acids. Catalyzes the cis-dehydration of 3-dehydroquinate (DHQ) and introduces the first double bond of the aromatic ring to yield 3-dehydroshikimate. This Thermoplasma volcanium (strain ATCC 51530 / DSM 4299 / JCM 9571 / NBRC 15438 / GSS1) protein is 3-dehydroquinate dehydratase.